Consider the following 634-residue polypeptide: 1-deoxy-D-xylulose-5-phosphate synthase (634 aa).

Thiamine diphosphate is bound by residues H74 and 115 to 117 (AHS). D146 serves as a coordination point for Mg(2+). Residues 147–148 (GA), N176, Y283, and E365 contribute to the thiamine diphosphate site. A Mg(2+)-binding site is contributed by N176.

This sequence belongs to the transketolase family. DXPS subfamily. In terms of assembly, homodimer. The cofactor is Mg(2+). Requires thiamine diphosphate as cofactor.

It catalyses the reaction D-glyceraldehyde 3-phosphate + pyruvate + H(+) = 1-deoxy-D-xylulose 5-phosphate + CO2. It functions in the pathway metabolic intermediate biosynthesis; 1-deoxy-D-xylulose 5-phosphate biosynthesis; 1-deoxy-D-xylulose 5-phosphate from D-glyceraldehyde 3-phosphate and pyruvate: step 1/1. In terms of biological role, catalyzes the acyloin condensation reaction between C atoms 2 and 3 of pyruvate and glyceraldehyde 3-phosphate to yield 1-deoxy-D-xylulose-5-phosphate (DXP). This is 1-deoxy-D-xylulose-5-phosphate synthase from Burkholderia ambifaria (strain MC40-6).